A 1112-amino-acid chain; its full sequence is Electrogenic sodium bicarbonate cotransporter 4 (1112 aa).

A compositionally biased stretch (basic and acidic residues) spans 1–13 (MKVEEKAGVKKLE). Disordered stretches follow at residues 1–80 (MKVE…SSLG), 220–255 (KKPI…HHST), and 439–469 (GRSG…NEAE). The Cytoplasmic segment spans residues 1–513 (MKVEEKAGVK…DFYDGFHIQS (513 aa)). Polar residues-rich tracts occupy residues 53 to 67 (QRVQ…SQQD) and 233 to 244 (SVSTTNRSSARS). Gly residues predominate over residues 444–465 (SAGGGGSGGGAGGSGAGGGGSG). A helical transmembrane segment spans residues 514 to 536 (ISAVLFIYLGCITNAITFGGLLG). Residues 537–547 (DATDNYQGVME) lie on the Extracellular side of the membrane. A helical transmembrane segment spans residues 548-579 (SFLGTAMAGSLFCLFSGQPLIILSSTGPILIF). The Cytoplasmic portion of the chain corresponds to 580–598 (EKLLFDFSKANGLDYMEFR). The chain crosses the membrane as a helical span at residues 599 to 620 (LWIGLHSAIQCLILVATDASFI). Over 621-734 (IKYITRFTEE…LGSSCQFVPD (114 aa)) the chain is Extracellular. Residues 735–753 (LALMSFILFFGTYSMTLTL) traverse the membrane as a helical segment. The Cytoplasmic segment spans residues 754–772 (KKFKFSRYFPTKVRTLVAD). A helical membrane pass occupies residues 773–792 (FSIVFSILLFCGIDACFGLQ). The Extracellular portion of the chain corresponds to 793 to 820 (TPKLHVPNVIKPTRPDRGWFVAPFGKNP). Residues 821-839 (WWVYPASILPALLVTILIF) traverse the membrane as a helical segment. Residues 840-858 (MDQQITAVIVNRKENKLRK) lie on the Cytoplasmic side of the membrane. The chain crosses the membrane as a helical span at residues 859-875 (AAGYHLDLFWVGILMAL). At 876–880 (CSFMG) the chain is on the extracellular side. A helical membrane pass occupies residues 881 to 900 (LPWYVAATVISIAHIDSLKM). Residues 901–920 (ETETSAPGEQPQFLGVREQR) are Cytoplasmic-facing. A helical transmembrane segment spans residues 921–940 (VTGVMVFILTGISVFLAPIL). The Extracellular segment spans residues 941–945 (KYIPM). The helical transmembrane segment at 946–966 (PVLYGVFLYMGVASLNGIQFW) threads the bilayer. Residues 967 to 992 (DRCKLFLMPAKHQPDHAFLRHVPLRR) lie on the Cytoplasmic side of the membrane. The chain crosses the membrane as a helical span at residues 993–1010 (IHLFTLVQILCLALLWIL). At 1011–1015 (KSTMA) the chain is on the extracellular side. The chain crosses the membrane as a helical span at residues 1016–1033 (AIIFPVMILGLIIVRRLL). Topologically, residues 1034–1112 (DLIFSQHDLA…KRSSSWSHSL (79 aa)) are cytoplasmic. The span at 1055–1074 (KESDRKKRRKEVHENTDKEP) shows a compositional bias: basic and acidic residues. A disordered region spans residues 1055-1112 (KESDRKKRRKEVHENTDKEPQFLPPSVVKIPMEGIPSDPQNGIHCVGRKRSSSWSHSL).

It belongs to the anion exchanger (TC 2.A.31) family. As to expression, observed in hepatocytes and in the apical region of bile duct intrahepatic cholangiocytes of liver. Also observed in uroepithelium cells lining the outer pelvic wall of the kidney (at protein level). Highly expressed in colon, distal colon, liver, kidney and testis. Moderate expression in duodenum and stomach and weak expression in heart. In kidney, very weakly expressed in the inner medulla, but abundantly expressed in cortex and outer medulla in the medullary thick ascending and cortical thick ascending limbs of the loop of Henle.

It localises to the basolateral cell membrane. The protein localises to the apical cell membrane. It carries out the reaction 2 hydrogencarbonate(out) + Na(+)(out) = 2 hydrogencarbonate(in) + Na(+)(in). The catalysed reaction is 3 hydrogencarbonate(out) + Na(+)(out) = 3 hydrogencarbonate(in) + Na(+)(in). Functionally, mediates sodium- and bicarbonate-dependent electrogenic sodium bicarbonate cotransport, with a Na(+):HCO3(-) stoichiometry varying from 1:2 to 1:3. The protein is Electrogenic sodium bicarbonate cotransporter 4 of Rattus norvegicus (Rat).